The following is a 523-amino-acid chain: MTSVLFMVGVLLGAFGSTHCSIQIVFPSETKLVWKPVLKGTRYCPQSAELNLEPDLKTMAFDSKVPIGITPSNSDGYLCHAAKWVTTCDFRWYGPKYITHSVHSLRPTVSDCKAAVEAYNAGTLMYPGFPPESCGYASITDSEFYVMLVTPHPVGVDDYRGHWVDPLFPTSECNSNFCETVHNATMWIPKDLKTHDVCSQDFQTIRVSVMYPQTKPTKGADLTLKSKFHAHMKGDRVCKMKFCNKNGLRLGNGEWIEVGDEVMLDNSKLLSLFPDCLVGSVVKSTLLSEGVQTALWETDRLLDYSLCQNTWEKIDRKEPLSAVDLSYLAPRSPGKGMAYIVANGSLMSAPARYIRVWIDSPILKEIKGKKESASGIDTVLWEQWLPFNGMELGPNGLIKTKSGYKFPLYLLGMGIVDQDLQELSSVNPVDHPHVPIAQAFVSEGEEVFFGDTGVSKNPIELISGWFSDWKETAAALGFAAISVILIIGLMRLLPLLCRRRKQKKVIYKDVELNSFDPRQAFHR.

The first 20 residues, 1-20 (MTSVLFMVGVLLGAFGSTHC), serve as a signal peptide directing secretion. Residues 21–475 (SIQIVFPSET…FSDWKETAAA (455 aa)) lie on the Virion surface side of the membrane. 6 disulfides stabilise this stretch: Cys-44/Cys-307, Cys-79/Cys-112, Cys-88/Cys-134, Cys-173/Cys-178, Cys-198/Cys-243, and Cys-238/Cys-276. Residues 57–176 (KTMAFDSKVP…LFPTSECNSN (120 aa)) form a fusion peptide region. Residue Asn-183 is glycosylated (N-linked (GlcNAc...) asparagine; by host). The trimerization stretch occupies residues 262–316 (VMLDNSKLLSLFPDCLVGSVVKSTLLSEGVQTALWETDRLLDYSLCQNTWEKIDR). N-linked (GlcNAc...) asparagine; by host glycosylation is present at Asn-343. The tract at residues 391-413 (ELGPNGLIKTKSGYKFPLYLLGM) is trimerization. The chain crosses the membrane as a helical span at residues 476-496 (LGFAAISVILIIGLMRLLPLL). Residue Cys-497 is the site of S-palmitoyl cysteine; by host attachment. At 497–523 (CRRRKQKKVIYKDVELNSFDPRQAFHR) the chain is on the intravirion side.

It belongs to the vesiculovirus glycoprotein family. As to quaternary structure, homotrimer. Interacts with host LDL at target cell surface. In terms of processing, glycosylated by host. Palmitoylated by host.

The protein localises to the virion membrane. Its subcellular location is the host membrane. Functionally, attaches the virus to host receptors, inducing clathrin-dependent endocytosis of the virion. In the endosome, the acidic pH induces conformational changes in the glycoprotein trimer, which trigger fusion between virus and endosomal membrane. In Gerbillinae (gerbils), this protein is Glycoprotein (G).